Reading from the N-terminus, the 154-residue chain is Putative pre-16S rRNA nuclease (154 aa).

The protein belongs to the YqgF nuclease family.

The protein localises to the cytoplasm. In terms of biological role, could be a nuclease involved in processing of the 5'-end of pre-16S rRNA. In Ruegeria pomeroyi (strain ATCC 700808 / DSM 15171 / DSS-3) (Silicibacter pomeroyi), this protein is Putative pre-16S rRNA nuclease.